We begin with the raw amino-acid sequence, 122 residues long: UPF0102 protein TTE1452 (122 aa).

This sequence belongs to the UPF0102 family.

This chain is UPF0102 protein TTE1452, found in Caldanaerobacter subterraneus subsp. tengcongensis (strain DSM 15242 / JCM 11007 / NBRC 100824 / MB4) (Thermoanaerobacter tengcongensis).